The sequence spans 169 residues: MAQHEVNYLKSGGLPVVLTTVDHLVNWGRSNSLWALTYGLACCAIEMMASGAGRYDFDRFGTIFRASPRQADVMIVAGTLTKKHAEFIRRLYDQMSEPKWVISMGSCANTGGMFNTYATVQGCDRIIPVDVYLPGCAPRPETLQYAVMVLQQKIRREKASRKLPPKRLV.

Residues C42, C43, C107, and C136 each coordinate [4Fe-4S] cluster.

This sequence belongs to the complex I 20 kDa subunit family. In terms of assembly, NDH-1 is composed of 14 different subunits. Subunits NuoB, C, D, E, F, and G constitute the peripheral sector of the complex. [4Fe-4S] cluster is required as a cofactor.

It is found in the cell inner membrane. It catalyses the reaction a quinone + NADH + 5 H(+)(in) = a quinol + NAD(+) + 4 H(+)(out). Functionally, NDH-1 shuttles electrons from NADH, via FMN and iron-sulfur (Fe-S) centers, to quinones in the respiratory chain. The immediate electron acceptor for the enzyme in this species is believed to be ubiquinone. Couples the redox reaction to proton translocation (for every two electrons transferred, four hydrogen ions are translocated across the cytoplasmic membrane), and thus conserves the redox energy in a proton gradient. In Wolinella succinogenes (strain ATCC 29543 / DSM 1740 / CCUG 13145 / JCM 31913 / LMG 7466 / NCTC 11488 / FDC 602W) (Vibrio succinogenes), this protein is NADH-quinone oxidoreductase subunit B.